We begin with the raw amino-acid sequence, 114 residues long: UPF0102 protein CD630_12710 (114 aa).

The protein belongs to the UPF0102 family.

The sequence is that of UPF0102 protein CD630_12710 from Clostridioides difficile (strain 630) (Peptoclostridium difficile).